The following is a 328-amino-acid chain: Gonadotropin-releasing hormone receptor (328 aa).

Residues Met-1 to Arg-38 are Extracellular-facing. N-linked (GlcNAc...) asparagine glycosylation is present at Asn-18. Residues Val-39–Leu-58 form a helical membrane-spanning segment. Over Lys-59 to Lys-77 the chain is Cytoplasmic. The chain crosses the membrane as a helical span at residues Leu-78 to Leu-97. The Extracellular portion of the chain corresponds to Asp-98–Lys-115. The N-linked (GlcNAc...) asparagine glycan is linked to Asn-102. Cysteines 114 and 196 form a disulfide. A helical membrane pass occupies residues Val-116–Leu-137. Residues Asp-138–Trp-164 are Cytoplasmic-facing. A helical membrane pass occupies residues Leu-165–Ala-184. Topologically, residues Asp-185–Asn-212 are extracellular. Residues Phe-213–Ala-232 traverse the membrane as a helical segment. Residues Lys-233 to Thr-281 lie on the Cytoplasmic side of the membrane. Residues Pro-282–Val-300 traverse the membrane as a helical segment. Topologically, residues Ser-301–His-306 are extracellular. A helical membrane pass occupies residues Phe-307 to Phe-326. Topologically, residues Ser-327–Leu-328 are cytoplasmic.

The protein belongs to the G-protein coupled receptor 1 family.

Its subcellular location is the cell membrane. In terms of biological role, receptor for gonadotropin releasing hormone (GnRH) that mediates the action of GnRH to stimulate the secretion of the gonadotropic hormones luteinizing hormone (LH) and follicle-stimulating hormone (FSH). This receptor mediates its action by association with G-proteins that activate a phosphatidylinositol-calcium second messenger system. The sequence is that of Gonadotropin-releasing hormone receptor (GNRHR) from Bos mutus grunniens (Wild yak).